A 294-amino-acid chain; its full sequence is Small ribosomal subunit biogenesis GTPase RsgA (294 aa).

One can recognise a CP-type G domain in the interval Lys63 to Leu223. GTP is bound by residues Ser112–Asp115 and Gly166–Ser174. Zn(2+)-binding residues include Cys247, Cys252, His254, and Cys260.

It belongs to the TRAFAC class YlqF/YawG GTPase family. RsgA subfamily. Monomer. Associates with 30S ribosomal subunit, binds 16S rRNA. The cofactor is Zn(2+).

The protein resides in the cytoplasm. Its function is as follows. One of several proteins that assist in the late maturation steps of the functional core of the 30S ribosomal subunit. Helps release RbfA from mature subunits. May play a role in the assembly of ribosomal proteins into the subunit. Circularly permuted GTPase that catalyzes slow GTP hydrolysis, GTPase activity is stimulated by the 30S ribosomal subunit. The polypeptide is Small ribosomal subunit biogenesis GTPase RsgA (Halalkalibacterium halodurans (strain ATCC BAA-125 / DSM 18197 / FERM 7344 / JCM 9153 / C-125) (Bacillus halodurans)).